The sequence spans 212 residues: ATP-dependent dethiobiotin synthetase BioD (212 aa).

An ATP-binding site is contributed by 13–18 (GIGKTV). Residue threonine 17 participates in Mg(2+) binding. The active site involves lysine 33. Serine 37 is a binding site for substrate. Glutamate 100 serves as a coordination point for Mg(2+). ATP-binding positions include 100 to 103 (EGAG) and 184 to 186 (PRL).

It belongs to the dethiobiotin synthetase family. As to quaternary structure, homodimer. It depends on Mg(2+) as a cofactor.

The protein localises to the cytoplasm. The enzyme catalyses (7R,8S)-7,8-diammoniononanoate + CO2 + ATP = (4R,5S)-dethiobiotin + ADP + phosphate + 3 H(+). The protein operates within cofactor biosynthesis; biotin biosynthesis; biotin from 7,8-diaminononanoate: step 1/2. In terms of biological role, catalyzes a mechanistically unusual reaction, the ATP-dependent insertion of CO2 between the N7 and N8 nitrogen atoms of 7,8-diaminopelargonic acid (DAPA, also called 7,8-diammoniononanoate) to form a ureido ring. This is ATP-dependent dethiobiotin synthetase BioD from Agrobacterium fabrum (strain C58 / ATCC 33970) (Agrobacterium tumefaciens (strain C58)).